The sequence spans 1218 residues: Coatomer subunit alpha-1 (1218 aa).

9 WD repeats span residues 7-48, 49-88, 91-132, 133-172, 202-241, 246-285, 288-326, 363-404, and 450-489; these read TKSN…DRFD, EHDG…CLFT, GHLD…AVLT, GHNH…KKTV, GHDR…AWEV, GHMN…GIQT, REHD…PAFS, SLNQ…AGRA, and PLPI…GELQ. The interval 857-882 is disordered; it reads NGGDGFDAEEGEANEEDGEEGGWDLE. A compositionally biased stretch (acidic residues) spans 862–882; that stretch reads FDAEEGEANEEDGEEGGWDLE.

As to quaternary structure, oligomeric complex that consists of at least the alpha, beta, beta', gamma, delta, epsilon and zeta subunits.

Its subcellular location is the cytoplasm. It localises to the golgi apparatus membrane. The protein localises to the cytoplasmic vesicle. It is found in the COPI-coated vesicle membrane. In terms of biological role, the coatomer is a cytosolic protein complex that binds to dilysine motifs and reversibly associates with Golgi non-clathrin-coated vesicles, which further mediate biosynthetic protein transport from the ER, via the Golgi up to the trans Golgi network. Coatomer complex is required for budding from Golgi membranes, and is essential for the retrograde Golgi-to-ER transport of dilysine-tagged proteins. The sequence is that of Coatomer subunit alpha-1 from Oryza sativa subsp. japonica (Rice).